Reading from the N-terminus, the 626-residue chain is tRNA uridine 5-carboxymethylaminomethyl modification enzyme MnmG (626 aa).

13–18 contributes to the FAD binding site; that stretch reads GGGHAG. 273 to 287 contacts NAD(+); sequence GPRYCPSIEDKIHRF.

It belongs to the MnmG family. Homodimer. Heterotetramer of two MnmE and two MnmG subunits. It depends on FAD as a cofactor.

The protein resides in the cytoplasm. NAD-binding protein involved in the addition of a carboxymethylaminomethyl (cmnm) group at the wobble position (U34) of certain tRNAs, forming tRNA-cmnm(5)s(2)U34. The protein is tRNA uridine 5-carboxymethylaminomethyl modification enzyme MnmG of Acinetobacter baumannii (strain ATCC 17978 / DSM 105126 / CIP 53.77 / LMG 1025 / NCDC KC755 / 5377).